The sequence spans 443 residues: Trigger factor (443 aa).

In terms of domain architecture, PPIase FKBP-type spans 164-249 (GDVLCVDFVG…AKSLKKAVDP (86 aa)).

This sequence belongs to the FKBP-type PPIase family. Tig subfamily.

It localises to the cytoplasm. It carries out the reaction [protein]-peptidylproline (omega=180) = [protein]-peptidylproline (omega=0). Involved in protein export. Acts as a chaperone by maintaining the newly synthesized protein in an open conformation. Functions as a peptidyl-prolyl cis-trans isomerase. This is Trigger factor from Gluconobacter oxydans (strain 621H) (Gluconobacter suboxydans).